Consider the following 290-residue polypeptide: Protein MGF 110-9L (290 aa).

Positions Met-1–Ser-19 are cleaved as a signal peptide. The A repeat unit spans residues Met-1–Ala-160. The next 2 membrane-spanning stretches (helical) occupy residues Val-128–Val-148 and Leu-163–Asn-183. Residues Thr-161–Leu-290 form a B repeat.

This sequence belongs to the asfivirus MGF 110 family.

It is found in the membrane. The protein is Protein MGF 110-9L of Ornithodoros (relapsing fever ticks).